A 33-amino-acid polypeptide reads, in one-letter code: Trypsin inhibitor 1 (33 aa).

3 cysteine pairs are disulfide-bonded: cysteine 1-cysteine 17, cysteine 8-cysteine 21, and cysteine 16-cysteine 32.

Expressed in leaves and fruit flesh (at protein level).

In terms of biological role, inhibits trypsin (IC(50)=471 nM). The protein is Trypsin inhibitor 1 of Beta vulgaris subsp. vulgaris (Beet).